Here is an 848-residue protein sequence, read N- to C-terminus: Adenylate cyclase (848 aa).

Residues 1 to 535 (MYLYIETLKQ…DISHHFPLRL (535 aa)) are catalytic. The tract at residues 541–848 (KALYSPCEIR…SQPAQQFQLH (308 aa)) is regulatory.

This sequence belongs to the adenylyl cyclase class-1 family.

The protein resides in the cytoplasm. It catalyses the reaction ATP = 3',5'-cyclic AMP + diphosphate. With respect to regulation, the regulatory domain is involved in the regulation of cyclase activity by the carbon source. This is Adenylate cyclase (cya) from Yersinia intermedia.